The sequence spans 252 residues: Triosephosphate isomerase (252 aa).

10–12 (NWK) lines the substrate pocket. The active-site Electrophile is the His96. Catalysis depends on Glu168, which acts as the Proton acceptor. Substrate is bound by residues Gly174, Ser214, and 235-236 (GG).

Belongs to the triosephosphate isomerase family. Homodimer.

The protein resides in the cytoplasm. It carries out the reaction D-glyceraldehyde 3-phosphate = dihydroxyacetone phosphate. Its pathway is carbohydrate biosynthesis; gluconeogenesis. It functions in the pathway carbohydrate degradation; glycolysis; D-glyceraldehyde 3-phosphate from glycerone phosphate: step 1/1. In terms of biological role, involved in the gluconeogenesis. Catalyzes stereospecifically the conversion of dihydroxyacetone phosphate (DHAP) to D-glyceraldehyde-3-phosphate (G3P). This Streptococcus pyogenes serotype M18 (strain MGAS8232) protein is Triosephosphate isomerase.